The sequence spans 148 residues: SsrA-binding protein (148 aa).

It belongs to the SmpB family.

The protein localises to the cytoplasm. In terms of biological role, required for rescue of stalled ribosomes mediated by trans-translation. Binds to transfer-messenger RNA (tmRNA), required for stable association of tmRNA with ribosomes. tmRNA and SmpB together mimic tRNA shape, replacing the anticodon stem-loop with SmpB. tmRNA is encoded by the ssrA gene; the 2 termini fold to resemble tRNA(Ala) and it encodes a 'tag peptide', a short internal open reading frame. During trans-translation Ala-aminoacylated tmRNA acts like a tRNA, entering the A-site of stalled ribosomes, displacing the stalled mRNA. The ribosome then switches to translate the ORF on the tmRNA; the nascent peptide is terminated with the 'tag peptide' encoded by the tmRNA and targeted for degradation. The ribosome is freed to recommence translation, which seems to be the essential function of trans-translation. The chain is SsrA-binding protein from Pseudothermotoga lettingae (strain ATCC BAA-301 / DSM 14385 / NBRC 107922 / TMO) (Thermotoga lettingae).